A 474-amino-acid chain; its full sequence is Glutamate--tRNA ligase (474 aa).

Residues 10-20 (PSPTGYLHIGG) carry the 'HIGH' region motif. Positions 107, 109, 134, and 136 each coordinate Zn(2+). The 'KMSKS' region signature appears at 244–248 (RLSKR). Lysine 247 provides a ligand contact to ATP.

The protein belongs to the class-I aminoacyl-tRNA synthetase family. Glutamate--tRNA ligase type 1 subfamily. Monomer. The cofactor is Zn(2+).

It is found in the cytoplasm. It carries out the reaction tRNA(Glu) + L-glutamate + ATP = L-glutamyl-tRNA(Glu) + AMP + diphosphate. Its function is as follows. Catalyzes the attachment of glutamate to tRNA(Glu) in a two-step reaction: glutamate is first activated by ATP to form Glu-AMP and then transferred to the acceptor end of tRNA(Glu). The chain is Glutamate--tRNA ligase from Anaeromyxobacter sp. (strain K).